A 474-amino-acid chain; its full sequence is PRAME family member 10 (474 aa).

The LRR 1; degenerate repeat unit spans residues 97–124; the sequence is RWKLQVLDLRDVDENFWTIWSGARVLSC. Residues 179–203 form an LRR 2; degenerate repeat; the sequence is HLCCSKVQNYSMPTSSFRNLLERIY. One copy of the LRR 3; degenerate repeat lies at 204 to 230; it reads PDSIQELEVWKKCSLNKTGKFAPYLSQ. The stretch at 231–265 is one LRR 4; degenerate repeat; it reads MSNLRELFLAFGYERELYVSVQWPCIPDLDSPFLC. 5 LRR repeats span residues 266 to 291, 292 to 323, 324 to 342, 348 to 375, and 376 to 400; these read LYYP…LRYL, KNPL…SQLK, ELRL…PLGV, AATL…ALSH, and CSQL…LLRH.

It belongs to the PRAME family.

This Homo sapiens (Human) protein is PRAME family member 10.